The following is a 355-amino-acid chain: MASNNNCAYELIEAEAQSWDYILSYLRPSCIKCAIQLGIPDILHKNADPIMSLSDLIAALPNLNPSKTTFIPILMRVLVDFGLFNYHQQQGDGYSLTTVGRLLVENHHFGNRSFFLFAQHPVVLNTAASVGDWLKDDLRTAFETADGKSHWDYCGADPEFNGVFNDAMAGDSRLMSNLLISDCCAGVFEGLTSLVDIGGGTGAVAMAIAGAFPSLKCIVLDLPHVIADRKGSGNLEFVAGSMFDKIPHANAILLKWILHNWDDEDCVKLLKKCKESISSRENGGKVIIIDMIMEDNYNNKQLVQSQHLMDLIMRITYASKERTEKEWEKLFLEAGFSGYKIITSLGLRSLIEIYP.

Aspartate 221 lines the S-adenosyl-L-methionine pocket. Catalysis depends on histidine 259, which acts as the Proton acceptor.

Belongs to the class I-like SAM-binding methyltransferase superfamily. Cation-independent O-methyltransferase family. As to quaternary structure, homodimer. Mainly expressed in leaves secreting glandular trichomes types 1 and 4 and, to a lesser extent, in storage trichomes type 6.

The catalysed reaction is quercetin + S-adenosyl-L-methionine = rhamnetin + S-adenosyl-L-homocysteine + H(+). It carries out the reaction kaempferol + S-adenosyl-L-methionine = kaempferide + S-adenosyl-L-homocysteine + H(+). The enzyme catalyses myricetin + S-adenosyl-L-methionine = 7-O-methylmyricetin + S-adenosyl-L-homocysteine + H(+). It catalyses the reaction kaempferide + S-adenosyl-L-methionine = 7,4'-O-dimethylkaempferol + S-adenosyl-L-homocysteine + H(+). The catalysed reaction is isorhamnetin + S-adenosyl-L-methionine = 3',4'-O-dimethylquercetin + S-adenosyl-L-homocysteine + 2 H(+). It carries out the reaction 3',4',5,7-tetrahydroxy-3-methoxyflavone + S-adenosyl-L-methionine = 3',4',5-trihydroxy-3,7-dimethoxyflavone + S-adenosyl-L-homocysteine + H(+). The enzyme catalyses rhamnetin + S-adenosyl-L-methionine = 7,4'-O-dimethylquercetin + S-adenosyl-L-homocysteine + H(+). It catalyses the reaction syringetin + S-adenosyl-L-methionine = 7,3',5'-O-trimethylmyricetin + S-adenosyl-L-homocysteine + H(+). The catalysed reaction is 3',4',5'-O-trimethylmyricetin + S-adenosyl-L-methionine = 7,3',4',5'-O-tetramethylmyricetin + S-adenosyl-L-homocysteine. It participates in flavonoid metabolism. Flavonoid 7/4'-O-methyltransferase involved in the biosynthesis of polymethoxylated flavonoids natural products such as myricetin derivatives, aroma compounds possessing antioxidant properties and exhibiting pharmacological activities such as anti-carcinogen, anti-viral, anti-thrombotic, anti-diabetic, anti-atherosclerotic, and anti-inflammatory effects. Catalyzes S-adenosylmethionine-dependent regioselective 7/4'-O-methylation of flavonoids; active on various hydroxylated flavonoid substrates, including myricetin, quercetin and kaempferol. Mediates the formation of 4'-methyl derivatives from kaempferol, 3'-methyl quercetin (isorhamnetin), 7-methyl quercetin (rhamnetin) and 3'-methyl myricetin, producing 4'-methyl kaempferol (kaempferide), 3',4'-dimethyl quercetin (4'-O-methyl isorhamnetin), 7,4'-dimethyl quercetin (4'-O-methyl rhamnetin, rhamnacene) and 3',4'-dimethyl myricetin, respectively. Triggers the 7-O-methylation of quercetin, myricetin, 4'-methyl kaempferol (kaempferide), 3-methyl quercetin, 3',5'-dimethyl myricetin (syringetin) and 3',4',5'-trimethyl myricetin, thus leading to production of 7-methyl quercetin (rhamnetin), 7-methyl myricetin, 7,4'-dimethyl kaempferol (7-O-methyl kaempferide), 3,7-dimethyl quercetin, 7,3',5'-trimethyl myricetin (7-O-methyl syringetin) and 7,3',4',5'-tetramethyl myricetin, respectively. The polypeptide is Myricetin 7/4'-O-methyltransferase 2 (Solanum habrochaites (Wild tomato)).